Consider the following 960-residue polypeptide: Probable glutamyl endopeptidase, chloroplastic (960 aa).

The N-terminal 62 residues, 1 to 62 (MMRFHKACHR…FSENPLTTVM (62 aa)), are a transit peptide targeting the chloroplast. The disordered stretch occupies residues 78–98 (SGGAEDGGGTSNGSLSASATA). Polar residues predominate over residues 89–98 (NGSLSASATA). Active-site charge relay system residues include Ser-780, Asp-854, and His-888. A disordered region spans residues 915–960 (TSDADTSPDQSKEGSDSADKVSTGTGGGNPEFGEHEVHSKLRRSLL). A compositionally biased stretch (basic and acidic residues) spans 924–933 (QSKEGSDSAD).

This sequence belongs to the peptidase S9D family.

The protein localises to the plastid. It is found in the chloroplast stroma. Serine-type protease active in vitro against the LHCII N-terminal. Cleaves its substrate on the carboxy-side of Glu residues. This chain is Probable glutamyl endopeptidase, chloroplastic (GEP), found in Arabidopsis thaliana (Mouse-ear cress).